A 470-amino-acid chain; its full sequence is Growth/differentiation factor 6 (470 aa).

The signal sequence occupies residues 1-22 (MDTSRVLLSAVFLISFLWDLPG). Residues 23-350 (FQQASISSSS…SPSPGRRRRR (328 aa)) constitute a propeptide that is removed on maturation. The interval 28-98 (ISSSSSSAEL…REPPGRGPRV (71 aa)) is disordered. Positions 45-80 (SRKEGRMPRAPRENATAREPLDRQEPPPRPQEEPQR) are enriched in basic and acidic residues. N-linked (GlcNAc...) asparagine glycosylation is present at N120. 2 disordered regions span residues 247 to 272 (PGAAEDEARAPGPQQPPPPDLRSLGF) and 308 to 366 (TEVV…KKSR). Positions 321 to 333 (GPPPPPPPPPPSG) are enriched in pro residues. Basic residues predominate over residues 345–366 (GRRRRRTAFASRHGKRHGKKSR). Disulfide bonds link C369–C435, C398–C467, and C402–C469.

This sequence belongs to the TGF-beta family. Homodimer; disulfide-linked.

The protein resides in the secreted. In terms of biological role, growth factor that controls proliferation and cellular differentiation in the retina and bone formation. Plays a key role in regulating apoptosis during retinal development. Establishes dorsal-ventral positional information in the retina and controls the formation of the retinotectal map. Required for normal formation of bones and joints in the limbs, skull, digits and axial skeleton. Plays a key role in establishing boundaries between skeletal elements during development. Regulation of GDF6 expression seems to be a mechanism for evolving species-specific changes in skeletal structures. Seems to positively regulate differentiation of chondrogenic tissue through the growth factor receptors subunits BMPR1A, BMPR1B, BMPR2 and ACVR2A, leading to the activation of SMAD1-SMAD5-SMAD8 complex. The regulation of chondrogenic differentiation is inhibited by NOG. Also involved in the induction of adipogenesis from mesenchymal stem cells. This mechanism acts through the growth factor receptors subunits BMPR1A, BMPR2 and ACVR2A and the activation of SMAD1-SMAD5-SMAD8 complex and MAPK14/p38. This chain is Growth/differentiation factor 6 (GDF6), found in Bos taurus (Bovine).